The primary structure comprises 423 residues: Putative competence-damage inducible protein (423 aa).

This sequence belongs to the CinA family.

The chain is Putative competence-damage inducible protein from Streptococcus pyogenes serotype M1.